Consider the following 344-residue polypeptide: Centromere protein L (344 aa).

Residue Ser39 is modified to Phosphoserine. Phosphothreonine is present on Thr43. At Ser53 the chain carries Phosphoserine.

It belongs to the CENP-L/IML3 family. As to quaternary structure, component of the CENPA-CAD complex, composed of CENPI, CENPK, CENPL, CENPO, CENPP, CENPQ, CENPR and CENPS. The CENPA-CAD complex interacts with the CENPA-NAC complex, at least composed of CENPA, CENPC, CENPH, CENPM, CENPN, CENPT and CENPU.

The protein localises to the nucleus. The protein resides in the chromosome. It is found in the centromere. Its function is as follows. Component of the CENPA-CAD (nucleosome distal) complex, a complex recruited to centromeres which is involved in assembly of kinetochore proteins, mitotic progression and chromosome segregation. May be involved in incorporation of newly synthesized CENPA into centromeres via its interaction with the CENPA-NAC complex. The sequence is that of Centromere protein L (CENPL) from Homo sapiens (Human).